The chain runs to 289 residues: uncharacterized protein (289 aa).

This is an uncharacterized protein from Acanthamoeba polyphaga mimivirus (APMV).